Here is a 1461-residue protein sequence, read N- to C-terminus: Pleiotropic drug resistance protein 2 (1461 aa).

The 274-residue stretch at 172 to 445 folds into the ABC transporter 1 domain; sequence LGLIHLSPSK…FEYMGFRCPE (274 aa). 205–212 contributes to the ATP binding site; sequence GPPGSGKT. The 214-residue stretch at 523–736 folds into the ABC transmembrane type-2 1 domain; that stretch reads ELFKSCFTRE…GQNAIAINEF (214 aa). Helical transmembrane passes span 541–561, 577–597, 622–642, 660–680, 685–705, and 771–791; these read FLYI…LTVF, FWGA…QELA, LPIW…WIIL, LLAF…IAAA, VVAN…GGFI, and ISIG…IAAL. One can recognise an ABC transporter 2 domain in the interval 859-1111; sequence LAFNHVNYYV…KLVEYFETIP (253 aa). Position 904 to 911 (904 to 911) interacts with ATP; the sequence is GVSGAGKT. The region spanning 1184 to 1398 is the ABC transmembrane type-2 2 domain; the sequence is TQCKACFWKQ…TIYGIFASQV (215 aa). Transmembrane regions (helical) follow at residues 1203–1223, 1243–1263, 1291–1311, 1321–1341, 1348–1368, 1379–1399, and 1430–1450; these read YNAI…VIFW, YAAV…VVAI, TIYV…MIGY, FYYF…MVVA, IAAI…GFLI, WYYW…SQVG, and FLLV…FVFA.

Belongs to the ABC transporter superfamily. ABCG family. PDR (TC 3.A.1.205) subfamily.

The protein localises to the membrane. Functionally, may be a general defense protein. This is Pleiotropic drug resistance protein 2 (PDR2) from Nicotiana plumbaginifolia (Leadwort-leaved tobacco).